A 282-amino-acid polypeptide reads, in one-letter code: Bis(5'-nucleosyl)-tetraphosphatase, symmetrical (282 aa).

The protein belongs to the Ap4A hydrolase family.

It catalyses the reaction P(1),P(4)-bis(5'-adenosyl) tetraphosphate + H2O = 2 ADP + 2 H(+). Functionally, hydrolyzes diadenosine 5',5'''-P1,P4-tetraphosphate to yield ADP. The protein is Bis(5'-nucleosyl)-tetraphosphatase, symmetrical of Escherichia fergusonii (strain ATCC 35469 / DSM 13698 / CCUG 18766 / IAM 14443 / JCM 21226 / LMG 7866 / NBRC 102419 / NCTC 12128 / CDC 0568-73).